Consider the following 500-residue polypeptide: Probable cytosol aminopeptidase (500 aa).

Lys265 and Asp270 together coordinate Mn(2+). Residue Lys277 is part of the active site. Mn(2+)-binding residues include Asp288, Asp347, and Glu349. Residue Arg351 is part of the active site.

This sequence belongs to the peptidase M17 family. Mn(2+) is required as a cofactor.

The protein resides in the cytoplasm. It catalyses the reaction Release of an N-terminal amino acid, Xaa-|-Yaa-, in which Xaa is preferably Leu, but may be other amino acids including Pro although not Arg or Lys, and Yaa may be Pro. Amino acid amides and methyl esters are also readily hydrolyzed, but rates on arylamides are exceedingly low.. The enzyme catalyses Release of an N-terminal amino acid, preferentially leucine, but not glutamic or aspartic acids.. Functionally, presumably involved in the processing and regular turnover of intracellular proteins. Catalyzes the removal of unsubstituted N-terminal amino acids from various peptides. The chain is Probable cytosol aminopeptidase from Rickettsia massiliae (strain Mtu5).